We begin with the raw amino-acid sequence, 528 residues long: Protein MGF 505-7R (528 aa).

ANK repeat units lie at residues 54–83, 129–158, 261–290, 292–321, and 322–352; these read SIND…NLHY, GCDL…LLNV, SVKR…IPRG, IERL…YKVK, and NVKK…LLDA.

It belongs to the asfivirus MGF 505 family. Interacts with host STING1. Interacts with host JAK1; this interaction leads to JAK1 degradation. Interacts with host JAK2; this interaction leads to JAK2 degradation. Interacts with host RELA; this interaction inhibits NF-kappa-B promoter activity.

The protein resides in the host cytoplasm. Plays a role in virus cell tropism, and may be required for efficient virus replication in macrophages. Interferes with host NF-kappa-B promoter activity mediated by TLR8. Mechanistically, inhibits the phosphorylation and subsequent nuclear translocation of host NF-kappa-B RELA subunit downstream of TLR8. Promotes the expression of the autophagy-related protein host ULK1 to degrade host STING and inhibit the interferon response. Inhibits also JAK1- and JAK2-mediated signaling and thus negatively regulates the IFN-gamma signaling. This is Protein MGF 505-7R from African swine fever virus (strain Badajoz 1971 Vero-adapted) (Ba71V).